Here is an 84-residue protein sequence, read N- to C-terminus: Toxin-like TcoNTxP1 (84 aa).

Residues 1–19 (MKRMILFTSCLLLIDIVVG) form the signal peptide. Positions 21–82 (KEGYPADSKG…VWDSATNKCG (62 aa)) constitute an LCN-type CS-alpha/beta domain. Disulfide bonds link C31/C81, C35/C57, C43/C62, and C47/C64. A Cysteine amide modification is found at C81. A propeptide spanning residues 82–84 (GKK) is cleaved from the precursor.

As to expression, expressed by the venom gland.

Its subcellular location is the secreted. Its function is as follows. This protein is not toxic. It induces an immune response similar to that induced by whole venom. Thus, polyclonal antibodies raised against this protein can neutralize the effects of the venom. This chain is Toxin-like TcoNTxP1, found in Tityus costatus (Brazilian scorpion).